The primary structure comprises 319 residues: Protein SICKLE (319 aa).

Disordered regions lie at residues 1–59 (MEDS…TQRF), 71–239 (SFKK…PGAE), and 262–299 (CSDASSSSSTGQAWLPKSIAPKKSVTSEATHKTSSNQQ). 2 stretches are compositionally biased toward polar residues: residues 27-56 (TTGTETSMSTGHLSNPLAETSNHQQDSFET) and 78-88 (PKQQYISSPSH). Pro residues predominate over residues 93-103 (PVPPQFPPSVP). Residues 185–210 (SYNNTPPQFSNYGRQNANWGGNTYPN) are compositionally biased toward polar residues. Positions 228-238 (DGGRRPMEPGA) are enriched in basic and acidic residues. A compositionally biased stretch (polar residues) spans 285–299 (SVTSEATHKTSSNQQ).

In terms of assembly, interacts with ubiquitin thioesterases UBP12 and UBP13, and with protein phosphatase 2A subunits PP2AB1, PP2AB2, PP2A3, PP2A4, PP2AA1 and PP2AA2. As to expression, expressed in the shoot apical meristem (SAM), embryos, seedlings, root tips, and root and leaf primordia.

It is found in the nucleus. Its subcellular location is the cytoplasm. The protein resides in the cytosol. Involved in miRNAs and siRNAs biogenesis and thus promotes gene silencing. Modulates auxin (IAA) transport-related developmental programs by regulating protein phosphatase 2A (PP2As)-driven auxin efflux carrier PIN proteins recycling and polarity. Required during development. Necessary for abiotic stress (e.g. chilling and salt) tolerance. This is Protein SICKLE from Arabidopsis thaliana (Mouse-ear cress).